The chain runs to 138 residues: Putative pre-16S rRNA nuclease (138 aa).

This sequence belongs to the YqgF nuclease family.

The protein localises to the cytoplasm. Its function is as follows. Could be a nuclease involved in processing of the 5'-end of pre-16S rRNA. The chain is Putative pre-16S rRNA nuclease from Cronobacter sakazakii (strain ATCC BAA-894) (Enterobacter sakazakii).